Consider the following 370-residue polypeptide: Probable neutral protease 2 homolog TRV_02539 (370 aa).

The signal sequence occupies residues 1-19 (MQLVAALAALGALVAPAVA). The propeptide occupies 20-188 (YPHAPMNETL…SIHSRALQKR (169 aa)). 2 cysteine pairs are disulfide-bonded: cysteine 196-cysteine 267 and cysteine 274-cysteine 292. Zn(2+) is bound at residue histidine 316. The active site involves glutamate 317. Positions 320 and 331 each coordinate Zn(2+).

The protein belongs to the peptidase M35 family. Requires Zn(2+) as cofactor.

It is found in the secreted. The enzyme catalyses Preferential cleavage of bonds with hydrophobic residues in P1'. Also 3-Asn-|-Gln-4 and 8-Gly-|-Ser-9 bonds in insulin B chain.. In terms of biological role, probable secreted metalloprotease that shows high activities on basic nuclear substrates such as histone and protamine. May be involved in virulence. The sequence is that of Probable neutral protease 2 homolog TRV_02539 from Trichophyton verrucosum (strain HKI 0517).